Here is a 237-residue protein sequence, read N- to C-terminus: Ribosomal RNA small subunit methyltransferase G (237 aa).

S-adenosyl-L-methionine contacts are provided by residues G76, F81, 128–129 (VE), and R147.

The protein belongs to the methyltransferase superfamily. RNA methyltransferase RsmG family.

Its subcellular location is the cytoplasm. Its function is as follows. Specifically methylates the N7 position of a guanine in 16S rRNA. In Prochlorococcus marinus (strain MIT 9215), this protein is Ribosomal RNA small subunit methyltransferase G.